Reading from the N-terminus, the 274-residue chain is 2,3,4,5-tetrahydropyridine-2,6-dicarboxylate N-succinyltransferase (274 aa).

The substrate site is built by Arg-106 and Asp-143.

It belongs to the transferase hexapeptide repeat family. In terms of assembly, homotrimer.

It is found in the cytoplasm. It carries out the reaction (S)-2,3,4,5-tetrahydrodipicolinate + succinyl-CoA + H2O = (S)-2-succinylamino-6-oxoheptanedioate + CoA. It functions in the pathway amino-acid biosynthesis; L-lysine biosynthesis via DAP pathway; LL-2,6-diaminopimelate from (S)-tetrahydrodipicolinate (succinylase route): step 1/3. This is 2,3,4,5-tetrahydropyridine-2,6-dicarboxylate N-succinyltransferase from Rickettsia prowazekii (strain Madrid E).